A 260-amino-acid chain; its full sequence is Putative sgc region transcriptional regulator (260 aa).

The HTH deoR-type domain occupies 5-61; the sequence is RPDRIKQMLHYLWQHRHLSTQQAMELFGYAEATVRRDFQYIVNQYPGMIRGHGCLDF. Positions 22–41 form a DNA-binding region, H-T-H motif; it reads LSTQQAMELFGYAEATVRRD.

Functionally, putative transcriptional regulator for the sgcREAQCX region. The sequence is that of Putative sgc region transcriptional regulator (sgcR) from Escherichia coli (strain K12).